Reading from the N-terminus, the 369-residue chain is Histidinol-phosphate aminotransferase 2 (369 aa).

Lys231 carries the post-translational modification N6-(pyridoxal phosphate)lysine.

Belongs to the class-II pyridoxal-phosphate-dependent aminotransferase family. Histidinol-phosphate aminotransferase subfamily. As to quaternary structure, homodimer. The cofactor is pyridoxal 5'-phosphate.

The enzyme catalyses L-histidinol phosphate + 2-oxoglutarate = 3-(imidazol-4-yl)-2-oxopropyl phosphate + L-glutamate. Its pathway is amino-acid biosynthesis; L-histidine biosynthesis; L-histidine from 5-phospho-alpha-D-ribose 1-diphosphate: step 7/9. This is Histidinol-phosphate aminotransferase 2 from Legionella pneumophila subsp. pneumophila (strain Philadelphia 1 / ATCC 33152 / DSM 7513).